The primary structure comprises 239 residues: ATP-dependent dethiobiotin synthetase BioD (239 aa).

An ATP-binding site is contributed by Glu-13–Val-18. Thr-17 contacts Mg(2+). Lys-38 is a catalytic residue. Thr-42 is a binding site for substrate. Positions 59 and 111 each coordinate Mg(2+). ATP is bound by residues Glu-111–Gly-114, Asn-175–Gln-176, and Pro-204–Leu-206.

It belongs to the dethiobiotin synthetase family. As to quaternary structure, homodimer. Mg(2+) serves as cofactor.

It localises to the cytoplasm. It catalyses the reaction (7R,8S)-7,8-diammoniononanoate + CO2 + ATP = (4R,5S)-dethiobiotin + ADP + phosphate + 3 H(+). It functions in the pathway cofactor biosynthesis; biotin biosynthesis; biotin from 7,8-diaminononanoate: step 1/2. Catalyzes a mechanistically unusual reaction, the ATP-dependent insertion of CO2 between the N7 and N8 nitrogen atoms of 7,8-diaminopelargonic acid (DAPA, also called 7,8-diammoniononanoate) to form a ureido ring. This Geobacillus sp. (strain WCH70) protein is ATP-dependent dethiobiotin synthetase BioD.